Here is a 156-residue protein sequence, read N- to C-terminus: Large ribosomal subunit protein uL22 (156 aa).

Belongs to the universal ribosomal protein uL22 family. As to quaternary structure, part of the 50S ribosomal subunit.

Functionally, this protein binds specifically to 23S rRNA. It makes multiple contacts with different domains of the 23S rRNA in the assembled 50S subunit and ribosome. In terms of biological role, the globular domain of the protein is located near the polypeptide exit tunnel on the outside of the subunit, while an extended beta-hairpin is found that lines the wall of the exit tunnel in the center of the 70S ribosome. The chain is Large ribosomal subunit protein uL22 from Sulfolobus acidocaldarius (strain ATCC 33909 / DSM 639 / JCM 8929 / NBRC 15157 / NCIMB 11770).